Consider the following 72-residue polypeptide: Cytochrome b-c1 complex subunit 9 (72 aa).

Residues 1 to 27 lie on the Mitochondrial matrix side of the membrane; sequence MESAARRSGGGVLEGFYRLVMRRTPVY. Residues 28–53 traverse the membrane as a helical segment; it reads VTFVIAGALLGERAVDYGVKTLWEKN. The Mitochondrial intermembrane portion of the chain corresponds to 54–72; sequence NVGKRYEDISVLGQRPVDE.

It belongs to the UQCR10/QCR9 family. Component of the ubiquinol-cytochrome c oxidoreductase (cytochrome b-c1 complex, complex III, CIII), a multisubunit enzyme composed of 3 respiratory subunits cytochrome b, cytochrome c1 and Rieske protein, 2 core protein subunits, and additional low-molecular weight protein subunits. The complex exists as an obligatory dimer and forms supercomplexes (SCs) in the inner mitochondrial membrane with cytochrome c oxidase (complex IV, CIV).

It is found in the mitochondrion inner membrane. In terms of biological role, component of the ubiquinol-cytochrome c oxidoreductase, a multisubunit transmembrane complex that is part of the mitochondrial electron transport chain which drives oxidative phosphorylation. The respiratory chain contains 3 multisubunit complexes succinate dehydrogenase (complex II, CII), ubiquinol-cytochrome c oxidoreductase (cytochrome b-c1 complex, complex III, CIII) and cytochrome c oxidase (complex IV, CIV), that cooperate to transfer electrons derived from NADH and succinate to molecular oxygen, creating an electrochemical gradient over the inner membrane that drives transmembrane transport and the ATP synthase. The cytochrome b-c1 complex catalyzes electron transfer from ubiquinol to cytochrome c, linking this redox reaction to translocation of protons across the mitochondrial inner membrane, with protons being carried across the membrane as hydrogens on the quinol. In the process called Q cycle, 2 protons are consumed from the matrix, 4 protons are released into the intermembrane space and 2 electrons are passed to cytochrome c. This chain is Cytochrome b-c1 complex subunit 9, found in Solanum tuberosum (Potato).